The chain runs to 120 residues: Large ribosomal subunit protein uL18 (120 aa).

This sequence belongs to the universal ribosomal protein uL18 family. In terms of assembly, part of the 50S ribosomal subunit; part of the 5S rRNA/L5/L18/L25 subcomplex. Contacts the 5S and 23S rRNAs.

In terms of biological role, this is one of the proteins that bind and probably mediate the attachment of the 5S RNA into the large ribosomal subunit, where it forms part of the central protuberance. This is Large ribosomal subunit protein uL18 from Bartonella henselae (strain ATCC 49882 / DSM 28221 / CCUG 30454 / Houston 1) (Rochalimaea henselae).